The sequence spans 468 residues: 6-phospho-beta-galactosidase (468 aa).

Residues Gln19, His116, Asn159, Glu160, and Asn297 each contribute to the D-galactose 6-phosphate site. The active-site Proton donor is Glu160. Glu375 (nucleophile) is an active-site residue. Ser428, Trp429, Lys435, and Tyr437 together coordinate D-galactose 6-phosphate.

Belongs to the glycosyl hydrolase 1 family.

The catalysed reaction is a 6-phospho-beta-D-galactoside + H2O = D-galactose 6-phosphate + an alcohol. The protein operates within carbohydrate metabolism; lactose degradation; D-galactose 6-phosphate and beta-D-glucose from lactose 6-phosphate: step 1/1. The chain is 6-phospho-beta-galactosidase from Streptococcus pyogenes serotype M6 (strain ATCC BAA-946 / MGAS10394).